The primary structure comprises 377 residues: MQNQIISLSRSLIQRKSISPNDEGCQQLIAERLQAVRFKLEWLPFGDTLNLWATHGEGEPCLAFAGHTDVVPEGDESQWTYPPFSAEIVDDMLYGRGAADMKGSLAAMVIACETFVKNNPNHQGKIALLITSDEEAAAKDGTVKVVETLMQRQEPIHYCVVGEPSSTKQLGDVVKNGRRGSITANLYIEGIQGHVAYPHLAENPVHTALPFLSELTAYQWDNGNEFFPPTSLQIANIKAGTGSNNVIPGELYVQFNLRYCTEVNDEIIKTKVAEMLRKYGLKHRIEWNLSGKPFLADNGKLVQATIQAVENVTQITPKLDTGGGTSDGRFIALMGAEVVEFGPINQTIHKVNECVNVNDLGKCGEVYYQILCSVIPN.

Zn(2+) is bound at residue His67. Asp69 is a catalytic residue. Asp100 serves as a coordination point for Zn(2+). Glu134 acts as the Proton acceptor in catalysis. 3 residues coordinate Zn(2+): Glu135, Glu163, and His349.

The protein belongs to the peptidase M20A family. DapE subfamily. In terms of assembly, homodimer. The cofactor is Zn(2+). Requires Co(2+) as cofactor.

It catalyses the reaction N-succinyl-(2S,6S)-2,6-diaminopimelate + H2O = (2S,6S)-2,6-diaminopimelate + succinate. Its pathway is amino-acid biosynthesis; L-lysine biosynthesis via DAP pathway; LL-2,6-diaminopimelate from (S)-tetrahydrodipicolinate (succinylase route): step 3/3. Its function is as follows. Catalyzes the hydrolysis of N-succinyl-L,L-diaminopimelic acid (SDAP), forming succinate and LL-2,6-diaminopimelate (DAP), an intermediate involved in the bacterial biosynthesis of lysine and meso-diaminopimelic acid, an essential component of bacterial cell walls. The protein is Succinyl-diaminopimelate desuccinylase of Glaesserella parasuis serovar 5 (strain SH0165) (Haemophilus parasuis).